Here is a 312-residue protein sequence, read N- to C-terminus: Transcription initiation factor IIB 1 (312 aa).

Residues 12–43 form a TFIIB-type zinc finger; that stretch reads EIERCPECGSTNLIRDYEHGELVCGECGAVIE. The Zn(2+) site is built by C16, C19, C35, and C38. 2 consecutive repeat copies span residues 129–212 and 223–304.

Belongs to the TFIIB family.

Functionally, stabilizes TBP binding to an archaeal box-A promoter. Also responsible for recruiting RNA polymerase II to the pre-initiation complex (DNA-TBP-TFIIB). The polypeptide is Transcription initiation factor IIB 1 (Thermoplasma volcanium (strain ATCC 51530 / DSM 4299 / JCM 9571 / NBRC 15438 / GSS1)).